The following is a 175-amino-acid chain: MSIYSIVTAPDERLKQKSKPVLECTDQTRKFMHDMLETMYNANGAGLAAVQVGVLQRILVIDIKAHDPVERPKDFYPLFIVNPEIIEQSTELVTANEGCISLPEQRIEVMRPESVKIRYLDYHGKSQELKANDWLARVIQHEYDHLEGKLMVDYLSNLKRDVVLRKLKKLKNNIV.

Fe cation contacts are provided by Cys-99 and His-141. Glu-142 is an active-site residue. His-145 lines the Fe cation pocket.

This sequence belongs to the polypeptide deformylase family. The cofactor is Fe(2+).

The enzyme catalyses N-terminal N-formyl-L-methionyl-[peptide] + H2O = N-terminal L-methionyl-[peptide] + formate. Functionally, removes the formyl group from the N-terminal Met of newly synthesized proteins. Requires at least a dipeptide for an efficient rate of reaction. N-terminal L-methionine is a prerequisite for activity but the enzyme has broad specificity at other positions. The protein is Peptide deformylase of Rickettsia typhi (strain ATCC VR-144 / Wilmington).